A 199-amino-acid polypeptide reads, in one-letter code: MKSLETMARYKKELTECARNLKLPFLAEHLDEILHEAQEKQQTYSEFLSTCLMRELRDKERRSYLTRLKFAGLPARYDLDLYDFSRTEGIDQRQMRELRELVWIRRTYNLLLVGDSGTGKTFIASGLIHEAVKAGYKAYLLTLEELFVCLKTKEISRPAMKTYKRIMKAQLLAIDDVTLFPLKGEDVLLLFKLVNCVQG.

An ATP-binding site is contributed by 114 to 121 (GDSGTGKT).

Belongs to the IS21/IS1162 putative ATP-binding protein family.

The polypeptide is Insertion sequence IS21-like putative ATP-binding protein (tnpB) (Bacteroides fragilis (strain YCH46)).